We begin with the raw amino-acid sequence, 363 residues long: 1,2-Dihydrovomilenine reductase (363 aa).

The Enoyl reductase (ER) domain maps to 24–352 (GILSPFKFSR…KGDVRYRFVI (329 aa)). Cys-51 contacts Zn(2+). Ser-53 contacts NADP(+). 6 residues coordinate Zn(2+): Asp-54, Glu-74, Cys-104, Cys-107, Cys-110, and Cys-118. NADP(+) is bound by residues Leu-193, Gly-195, Leu-196, Ser-215, Thr-216, Ser-217, Lys-220, Lys-221, Val-278, Ala-280, Thr-302, and Arg-349.

Belongs to the zinc-containing alcohol dehydrogenase family. Class-P subfamily. As to quaternary structure, homodimer. Zn(2+) is required as a cofactor. In terms of tissue distribution, mainly expressed in mature roots and, to a lower extent, in stems and leaves.

It localises to the cytoplasm. It catalyses the reaction 17-O-acetylnorajmaline + NADP(+) = (2R)-1,2-dihydrovomilenine + NADPH + 2 H(+). The catalysed reaction is (20S)-19,20-dihydrovomilenine + NADP(+) = vomilenine + NADPH + H(+). It functions in the pathway alkaloid biosynthesis; ajmaline biosynthesis. Its function is as follows. Alcohol dehydrogenase involved in the biosynthesis of ajmaline-type monoterpenoid indole alkaloids (MIAs) natural products, important plant-derived pharmaceuticals used in the therapy of heart disorders. Catalyzes the conversion of 1,2-dihydrovomilenine to 17-O-acetylnorajmaline, an intermediate chemical in the biosynthesis of ajmaline. Also able, with a lower efficiency, to convert vomilenine into 19,20-dihydrovomilenine. This chain is 1,2-Dihydrovomilenine reductase, found in Rauvolfia serpentina (Serpentine wood).